The sequence spans 409 residues: L-cysteine:1D-myo-inositol 2-amino-2-deoxy-alpha-D-glucopyranoside ligase (409 aa).

A Zn(2+)-binding site is contributed by cysteine 25. Residues 25-28 (CGIT), threonine 40, and 63-65 (NVT) each bind L-cysteinyl-5'-AMP. A 'HIGH' region motif is present at residues 27–37 (ITPYDATHIGH). Residues 179-184 (ERGGDP) carry the 'ERGGDP' region motif. Tryptophan 219 is an L-cysteinyl-5'-AMP binding site. Cysteine 223 provides a ligand contact to Zn(2+). 241-243 (GSD) is an L-cysteinyl-5'-AMP binding site. Histidine 248 contacts Zn(2+). L-cysteinyl-5'-AMP is bound at residue valine 274. The 'KMSKS' region motif lies at 280-284 (KMSKS).

Belongs to the class-I aminoacyl-tRNA synthetase family. MshC subfamily. In terms of assembly, monomer. The cofactor is Zn(2+).

It carries out the reaction 1D-myo-inositol 2-amino-2-deoxy-alpha-D-glucopyranoside + L-cysteine + ATP = 1D-myo-inositol 2-(L-cysteinylamino)-2-deoxy-alpha-D-glucopyranoside + AMP + diphosphate + H(+). In terms of biological role, catalyzes the ATP-dependent condensation of GlcN-Ins and L-cysteine to form L-Cys-GlcN-Ins. The protein is L-cysteine:1D-myo-inositol 2-amino-2-deoxy-alpha-D-glucopyranoside ligase of Clavibacter sepedonicus (Clavibacter michiganensis subsp. sepedonicus).